The primary structure comprises 357 residues: Protein RecA (357 aa).

G67–T74 contributes to the ATP binding site.

The protein belongs to the RecA family.

It localises to the cytoplasm. Its function is as follows. Can catalyze the hydrolysis of ATP in the presence of single-stranded DNA, the ATP-dependent uptake of single-stranded DNA by duplex DNA, and the ATP-dependent hybridization of homologous single-stranded DNAs. It interacts with LexA causing its activation and leading to its autocatalytic cleavage. The protein is Protein RecA of Leifsonia xyli subsp. xyli (strain CTCB07).